Here is a 108-residue protein sequence, read N- to C-terminus: Large ribosomal subunit protein uL24 (108 aa).

The protein belongs to the universal ribosomal protein uL24 family. As to quaternary structure, part of the 50S ribosomal subunit.

One of two assembly initiator proteins, it binds directly to the 5'-end of the 23S rRNA, where it nucleates assembly of the 50S subunit. Its function is as follows. One of the proteins that surrounds the polypeptide exit tunnel on the outside of the subunit. This Trichlorobacter lovleyi (strain ATCC BAA-1151 / DSM 17278 / SZ) (Geobacter lovleyi) protein is Large ribosomal subunit protein uL24.